A 160-amino-acid polypeptide reads, in one-letter code: 6,7-dimethyl-8-ribityllumazine synthase (160 aa).

Residues Trp-26, 58–60 (AIE), and 80–82 (VVI) contribute to the 5-amino-6-(D-ribitylamino)uracil site. 85-86 (ET) provides a ligand contact to (2S)-2-hydroxy-3-oxobutyl phosphate. His-88 functions as the Proton donor in the catalytic mechanism. Residue Asn-113 coordinates 5-amino-6-(D-ribitylamino)uracil. Arg-127 contacts (2S)-2-hydroxy-3-oxobutyl phosphate.

Belongs to the DMRL synthase family. As to quaternary structure, homopentamer.

The catalysed reaction is (2S)-2-hydroxy-3-oxobutyl phosphate + 5-amino-6-(D-ribitylamino)uracil = 6,7-dimethyl-8-(1-D-ribityl)lumazine + phosphate + 2 H2O + H(+). It participates in cofactor biosynthesis; riboflavin biosynthesis; riboflavin from 2-hydroxy-3-oxobutyl phosphate and 5-amino-6-(D-ribitylamino)uracil: step 1/2. Functionally, catalyzes the formation of 6,7-dimethyl-8-ribityllumazine by condensation of 5-amino-6-(D-ribitylamino)uracil with 3,4-dihydroxy-2-butanone 4-phosphate. This is the penultimate step in the biosynthesis of riboflavin. The chain is 6,7-dimethyl-8-ribityllumazine synthase from Mycobacteroides abscessus (strain ATCC 19977 / DSM 44196 / CCUG 20993 / CIP 104536 / JCM 13569 / NCTC 13031 / TMC 1543 / L948) (Mycobacterium abscessus).